The chain runs to 122 residues: Large ribosomal subunit protein uL14 (122 aa).

It belongs to the universal ribosomal protein uL14 family. Part of the 50S ribosomal subunit. Forms a cluster with proteins L3 and L19. In the 70S ribosome, L14 and L19 interact and together make contacts with the 16S rRNA in bridges B5 and B8.

Its function is as follows. Binds to 23S rRNA. Forms part of two intersubunit bridges in the 70S ribosome. This Campylobacter lari (strain RM2100 / D67 / ATCC BAA-1060) protein is Large ribosomal subunit protein uL14.